Consider the following 184-residue polypeptide: Photosystem I assembly protein Ycf4 (184 aa).

2 helical membrane passes run 22 to 42 (FCWA…GTSS) and 57 to 77 (IVFF…LFIS).

Belongs to the Ycf4 family.

The protein resides in the plastid. The protein localises to the chloroplast thylakoid membrane. Functionally, seems to be required for the assembly of the photosystem I complex. In Lactuca sativa (Garden lettuce), this protein is Photosystem I assembly protein Ycf4.